Reading from the N-terminus, the 586-residue chain is Methionine--tRNA ligase, mitochondrial (586 aa).

Residues 1-46 (MLRQCARWVLTRTRFGRGCRRYGSCSPSASGDAGEARAYFTTPIFY) constitute a mitochondrion transit peptide. Residues 45-55 (FYVNAAPHIGH) carry the 'HIGH' region motif. A 'KMSKS' region motif is present at residues 340–344 (KMSKS). Residue Lys-343 participates in ATP binding.

The protein belongs to the class-I aminoacyl-tRNA synthetase family.

It localises to the mitochondrion matrix. The enzyme catalyses tRNA(Met) + L-methionine + ATP = L-methionyl-tRNA(Met) + AMP + diphosphate. This is Methionine--tRNA ligase, mitochondrial (Mars2) from Mus musculus (Mouse).